The following is a 295-amino-acid chain: Undecaprenyl-diphosphatase (295 aa).

A run of 6 helical transmembrane segments spans residues 39-59 (PGAA…LLYF), 97-117 (WYII…QHAI), 121-141 (LRNL…LWIV), 198-218 (AFLM…VKAI), 232-252 (ATIA…IGFL), and 263-283 (FAIY…CGVL).

This sequence belongs to the UppP family.

It localises to the cell membrane. It carries out the reaction di-trans,octa-cis-undecaprenyl diphosphate + H2O = di-trans,octa-cis-undecaprenyl phosphate + phosphate + H(+). In terms of biological role, catalyzes the dephosphorylation of undecaprenyl diphosphate (UPP). Confers resistance to bacitracin. This is Undecaprenyl-diphosphatase from Bifidobacterium animalis subsp. lactis (strain AD011).